The chain runs to 861 residues: APC membrane recruitment protein 3 (861 aa).

Disordered stretches follow at residues 1–77, 179–206, 261–289, 351–415, 514–558, 576–644, 716–742, and 786–822; these read MELK…PKGG, AEGK…PPGE, PSLE…GPLQ, PLCP…FPRD, RGPT…GGAT, GLLA…SQKE, MLEQ…STQD, and AHGS…SQQE. Residues 362–384 show a composition bias toward polar residues; sequence SKASSIDTGTPKSEQPESVSTSD. Residues 518–530 are compositionally biased toward pro residues; the sequence is PRAPPTPGQPAAP. The span at 584–595 shows a compositional bias: low complexity; it reads ALGGATQGTGTL. A compositionally biased stretch (basic and acidic residues) spans 598–609; the sequence is DASREEETRGHS. Composition is skewed to polar residues over residues 615–629 and 719–730; these read SMES…TSGK and QKQSSSSPSMTT.

It belongs to the Amer family.

Its subcellular location is the cell membrane. In terms of biological role, regulator of the canonical Wnt signaling pathway. Acts by specifically binding phosphatidylinositol 4,5-bisphosphate (PtdIns(4,5)P2), translocating to the cell membrane. The polypeptide is APC membrane recruitment protein 3 (AMER3) (Homo sapiens (Human)).